The following is a 148-amino-acid chain: D-aminoacyl-tRNA deacylase (148 aa).

A Gly-cisPro motif, important for rejection of L-amino acids motif is present at residues 137-138 (GP).

It belongs to the DTD family. As to quaternary structure, homodimer.

The protein resides in the cytoplasm. It carries out the reaction glycyl-tRNA(Ala) + H2O = tRNA(Ala) + glycine + H(+). The enzyme catalyses a D-aminoacyl-tRNA + H2O = a tRNA + a D-alpha-amino acid + H(+). Functionally, an aminoacyl-tRNA editing enzyme that deacylates mischarged D-aminoacyl-tRNAs. Also deacylates mischarged glycyl-tRNA(Ala), protecting cells against glycine mischarging by AlaRS. Acts via tRNA-based rather than protein-based catalysis; rejects L-amino acids rather than detecting D-amino acids in the active site. By recycling D-aminoacyl-tRNA to D-amino acids and free tRNA molecules, this enzyme counteracts the toxicity associated with the formation of D-aminoacyl-tRNA entities in vivo and helps enforce protein L-homochirality. The sequence is that of D-aminoacyl-tRNA deacylase from Deinococcus geothermalis (strain DSM 11300 / CIP 105573 / AG-3a).